Consider the following 1021-residue polypeptide: Probable LRR receptor-like serine/threonine-protein kinase RFK1 (1021 aa).

The N-terminal stretch at methionine 1–alanine 39 is a signal peptide. Residues lysine 41–tyrosine 625 are Extracellular-facing. An N-linked (GlcNAc...) asparagine glycan is attached at asparagine 96. LRR repeat units lie at residues aspartate 99–leucine 122 and proline 123–serine 146. 3 N-linked (GlcNAc...) asparagine glycosylation sites follow: asparagine 136, asparagine 147, and asparagine 168. 5 LRR repeats span residues leucine 148–asparagine 168, serine 169–leucine 192, valine 193–leucine 216, asparagine 218–tryptophan 240, and lysine 241–asparagine 266. Asparagine 218 carries N-linked (GlcNAc...) asparagine glycosylation. N-linked (GlcNAc...) asparagine glycans are attached at residues asparagine 287 and asparagine 300. 4 LRR repeats span residues valine 288–leucine 312, lysine 313–glutamate 336, leucine 338–aspartate 359, and isoleucine 361–arginine 381. N-linked (GlcNAc...) asparagine glycans are attached at residues asparagine 486 and asparagine 512. A helical transmembrane segment spans residues isoleucine 626–cysteine 646. The Cytoplasmic portion of the chain corresponds to glycine 647 to proline 1021. The residue at position 670 (threonine 670) is a Phosphothreonine. The region spanning phenylalanine 681–tyrosine 956 is the Protein kinase domain. ATP is bound by residues isoleucine 687–valine 695 and lysine 709. Phosphotyrosine is present on tyrosine 754. Aspartate 807 (proton acceptor) is an active-site residue. Residue serine 840 is modified to Phosphoserine. Phosphothreonine occurs at positions 841 and 846. Residue tyrosine 854 is modified to Phosphotyrosine. A disordered region spans residues glutamate 985 to proline 1021. Residues serine 993–serine 1005 show a composition bias toward low complexity. A compositionally biased stretch (basic and acidic residues) spans glutamine 1012 to proline 1021.

It belongs to the protein kinase superfamily. Ser/Thr protein kinase family. In terms of tissue distribution, mostly expressed in flower buds, especially in stamens.

It is found in the membrane. It catalyses the reaction L-seryl-[protein] + ATP = O-phospho-L-seryl-[protein] + ADP + H(+). The catalysed reaction is L-threonyl-[protein] + ATP = O-phospho-L-threonyl-[protein] + ADP + H(+). This chain is Probable LRR receptor-like serine/threonine-protein kinase RFK1 (RKF1), found in Arabidopsis thaliana (Mouse-ear cress).